Reading from the N-terminus, the 201-residue chain is Prostamide/prostaglandin F synthase (201 aa).

Belongs to the peroxiredoxin-like PRXL2 family. Prostamide/prostaglandin F synthase subfamily.

The protein resides in the cytoplasm. Its subcellular location is the cytosol. It carries out the reaction prostaglandin H2 + [thioredoxin]-dithiol = prostaglandin F2alpha + [thioredoxin]-disulfide. It catalyses the reaction prostamide F2alpha + [thioredoxin]-disulfide = prostamide H2 + [thioredoxin]-dithiol. Functionally, catalyzes the reduction of prostaglandin-ethanolamide H(2) (prostamide H(2)) to prostamide F(2alpha) with NADPH as proton donor. Also able to reduce prostaglandin H(2) to prostaglandin F(2alpha). This chain is Prostamide/prostaglandin F synthase (prxl2b), found in Aquarana catesbeiana (American bullfrog).